We begin with the raw amino-acid sequence, 199 residues long: Protein MA_3591 (199 aa).

Positions 5-196 constitute an AMMECR1 domain; the sequence is TEGRVAVKLA…EKEPEGEVIE (192 aa).

This chain is Protein MA_3591, found in Methanosarcina acetivorans (strain ATCC 35395 / DSM 2834 / JCM 12185 / C2A).